A 473-amino-acid polypeptide reads, in one-letter code: Notchless protein homolog (473 aa).

The ubiquitin-like (UBL) domain stretch occupies residues 9-91 (GKTVMCLLTD…VLTIVYQQQA (83 aa)). WD repeat units lie at residues 107-146 (GHAEAVLCVSFSPDGKQLASGSGDTTVRLWDLYTETPLFT), 149-188 (GHKNWVLTVAWSPDGKHLVSGSKSGEICCWNPKKGELEGS), 192-236 (GHKK…SIIC), 239-277 (GHTLAVTCVKWGGDGIIYTGSQDCTIKMWETTQGKLIRE), 313-354 (EKQK…QPKK), 358-399 (GHQQ…TVFR), 400-439 (GHVGPVYQVSWSADSRLLLSGSKDSTLKIWEIRTKKLKQD), and 442-473 (GHADEVFAVDWSPDGEKVVSGGKDRVLKLWKG). Residues 417–432 (LLSGSKDSTLKIWEIR) carry the DWD box motif.

This sequence belongs to the NLE1/RSA4 family. In terms of assembly, associates with the pre-60S ribosomal particle. As to expression, constitutively and ubiquitously expressed.

It is found in the nucleus. It localises to the nucleolus. Functionally, required for female gametophyte development. This is Notchless protein homolog from Arabidopsis thaliana (Mouse-ear cress).